Reading from the N-terminus, the 333-residue chain is MSINVTEIVLHQLQQTAGETAELHTVLREDLLAISPEVEQMMLQLHQAYQNKAKAYGIFQSESIFAQQLNRLLEGESEFLPFSHSCAKMLATELVKYPFASGGTFILCRYTFLATEYLFIALIDSRASMLVDDKLEVKRTEYLDITQYDIACRINLTELKHNAQSNRYLTFIKGRVGRKVADFFMDFLGAEEGLNPQVQNQTLLQAVSDYCEQGELDSNQTQAVKKQVFEYCKGQINSGEEIAISELSASMPTLKEIDFADFAEQQEYGLEESIPPVRNALKTLTKYSGSGKGVTISFDAELLSQRIIWDELNDTLTIKGLPANLRDQLERNK.

This sequence belongs to the YejK family.

The protein resides in the cytoplasm. The protein localises to the nucleoid. This chain is Nucleoid-associated protein HAPS_0704, found in Glaesserella parasuis serovar 5 (strain SH0165) (Haemophilus parasuis).